A 381-amino-acid chain; its full sequence is Pentraxin-related protein PTX3 (381 aa).

An N-terminal signal peptide occupies residues 1–17 (MHLLAILFCALWSAVLA). Coiled coils occupy residues 74–101 (LQAT…SLAR) and 143–167 (EEAG…HAVQ). 2 cysteine pairs are disulfide-bonded: cysteine 179–cysteine 357 and cysteine 210–cysteine 271. Residues 179-381 (CETAILFPMR…QPHGGAQYVS (203 aa)) form the Pentraxin (PTX) domain. Asparagine 220 carries N-linked (GlcNAc...) asparagine glycosylation.

As to quaternary structure, homooctamer; disulfide-linked. Binds to C1q. (Microbial infection) Interacts with SARS coronavirus-2/SARS-CoV-2 Nucleoprotein and Spike protein homotrimer. In terms of processing, glycosylated.

The protein localises to the secreted. Functionally, plays a role in the regulation of innate resistance to pathogens, inflammatory reactions, possibly clearance of self-components and female fertility. The polypeptide is Pentraxin-related protein PTX3 (Homo sapiens (Human)).